The following is a 651-amino-acid chain: MNKLRQSFRRKKDVYVPEASRPHQWQTDEEGVRTGKCSFPVKYLGHVEVDESRGMHICEDAVKRLKAERKFFKGFFGKTGKKAVKAVLWVSADGLRVVDEKTKDLIVDQTIEKVSFCAPDRNFDRAFSYICRDGTTRRWICHCFMAVKDTGERLSHAVGCAFAACLERKQKREKECGVTATFDASRTTFTREGSFRVTTATEQAEREEIMKQMQDAKKAETDKIVVGSSVAPGNTAPSPSSPTSPTSDATTSLEMNNPHAIPRRHAPIEQLARQGSFRGFPALSQKMSPFKRQLSLRINELPSTMQRKTDFPIKNAVPEVEGEAESISSLCSQITNAFSTPEDPFSSAPMTKPVTVVAPQSPTFQANGTDSAFHVLAKPAHTALAPVAMPVRETNPWAHAPDAANKEIAATCSGTEWGQSSGAASPGLFQAGHRRTPSEADRWLEEVSKSVRAQQPQASAAPLQPVLQPPPPTAISQPASPFQGNAFLTSQPVPVGVVPALQPAFVPAQSYPVANGMPYPAPNVPVVGITPSQMVANVFGTAGHPQAAHPHQSPSLVRQQTFPHYEASSATTSPFFKPPAQHLNGSAAFNGVDDGRLASADRHTEVPTGTCPVDPFEAQWAALENKSKQRTNPSPTNPFSSDLQKTFEIEL.

The PID domain maps to 33-193; the sequence is RTGKCSFPVK…ASRTTFTREG (161 aa). Threonine 102 is modified (phosphothreonine; by AAK1). The residue at position 194 (serine 194) is a Phosphoserine. Residues 228 to 255 form a disordered region; that stretch reads SSVAPGNTAPSPSSPTSPTSDATTSLEM. The span at 235–252 shows a compositional bias: low complexity; that stretch reads TAPSPSSPTSPTSDATTS. Threonine 243 carries the phosphothreonine modification. The residue at position 244 (serine 244) is a Phosphoserine. Phosphoserine; by CaMK1 is present on residues serine 276 and serine 295. Disordered stretches follow at residues 419–483 and 623–651; these read QSSG…SPFQ and LENK…EIEL. A Phosphoserine modification is found at serine 425. Threonine 436 is modified (phosphothreonine). Basic and acidic residues predominate over residues 436-449; that stretch reads TPSEADRWLEEVSK. Phosphoserine is present on serine 438. Residues 453-466 are compositionally biased toward low complexity; sequence AQQPQASAAPLQPV. A compositionally biased stretch (polar residues) spans 630–644; that stretch reads RTNPSPTNPFSSDLQ. Phosphoserine is present on serine 634.

In terms of assembly, interacts with SIAH1. Interacts with LNX. Interacts with CDH1. Interacts with TFAP2A and TFAP2B. Interacts with RALBP1 in a complex also containing EPN1 and TFAP2A during interphase and mitosis. Interacts with AAK1. May interact with DUOXA1. Phosphorylated on Ser-276 and Ser-295 by CaMK1. Post-translationally, isoform 1 and isoform 2 are ubiquitinated by LNX leading to their subsequent proteasomal degradation. Ubiquitinated; mediated by SIAH1 and leading to its subsequent proteasomal degradation.

It is found in the cell membrane. The protein resides in the endosome membrane. Regulates clathrin-mediated receptor endocytosis. Plays a role in the process of neurogenesis. Required throughout embryonic neurogenesis to maintain neural progenitor cells, also called radial glial cells (RGCs), by allowing their daughter cells to choose progenitor over neuronal cell fate. Not required for the proliferation of neural progenitor cells before the onset of neurogenesis. Also involved postnatally in the subventricular zone (SVZ) neurogenesis by regulating SVZ neuroblasts survival and ependymal wall integrity. May also mediate local repair of brain ventricular wall damage. This is Protein numb homolog from Homo sapiens (Human).